The following is a 502-amino-acid chain: Galactose/methyl galactoside import ATP-binding protein MglA (502 aa).

ABC transporter domains follow at residues 10–245 and 255–502; these read LEMT…VGRE and NTPK…SRYL. 42-49 lines the ATP pocket; sequence GENGAGKS.

It belongs to the ABC transporter superfamily. Galactose/methyl galactoside importer (TC 3.A.1.2.3) family. In terms of assembly, the complex is composed of one ATP-binding protein (MglA), two transmembrane proteins (MglC) and a solute-binding protein (MglB).

The protein localises to the cell inner membrane. It carries out the reaction D-galactose(out) + ATP + H2O = D-galactose(in) + ADP + phosphate + H(+). It catalyses the reaction methyl beta-D-galactoside(out) + ATP + H2O = methyl beta-D-galactoside(in) + ADP + phosphate + H(+). Functionally, part of the ABC transporter complex MglABC involved in galactose/methyl galactoside import. Responsible for energy coupling to the transport system. This Vibrio vulnificus (strain CMCP6) protein is Galactose/methyl galactoside import ATP-binding protein MglA.